A 730-amino-acid chain; its full sequence is Ribosomal RNA large subunit methyltransferase K/L (730 aa).

The THUMP domain maps to 46-157 (TAYRLCLWSR…RGEAILSLDL (112 aa)). Basic and acidic residues predominate over residues 399 to 408 (AAVEEGEPRR). Residues 399–418 (AAVEEGEPRRQAPVASEPAR) form a disordered region.

This sequence belongs to the methyltransferase superfamily. RlmKL family.

It is found in the cytoplasm. It catalyses the reaction guanosine(2445) in 23S rRNA + S-adenosyl-L-methionine = N(2)-methylguanosine(2445) in 23S rRNA + S-adenosyl-L-homocysteine + H(+). The catalysed reaction is guanosine(2069) in 23S rRNA + S-adenosyl-L-methionine = N(2)-methylguanosine(2069) in 23S rRNA + S-adenosyl-L-homocysteine + H(+). Its function is as follows. Specifically methylates the guanine in position 2445 (m2G2445) and the guanine in position 2069 (m7G2069) of 23S rRNA. This Pseudomonas entomophila (strain L48) protein is Ribosomal RNA large subunit methyltransferase K/L.